Reading from the N-terminus, the 262-residue chain is Endoplasmic reticulum chaperone BiP (262 aa).

ATP is bound at residue G8–R11. The interdomain linker stretch occupies residues Q53 to V63. A substrate-binding (SBD) region spans residues C64 to T144. At K91 the chain carries N6-succinyllysine. R136 bears the Omega-N-methylarginine mark. At T162 the chain carries O-AMP-threonine; alternate. T162 bears the Phosphothreonine; alternate mark. An N6,N6,N6-trimethyllysine; by METTL21A; in vitro modification is found at K229. K229 carries the post-translational modification N6,N6-dimethyllysine; alternate. The residue at position 229 (K229) is an N6-methyllysine; alternate. N6-methyllysine is present on K235.

The protein belongs to the heat shock protein 70 family. Monomer and homooligomer; homooligomerization via the interdomain linker inactivates the chaperone activity and acts as a storage of HSPA5/BiP molecules. Interacts with DNAJC1 (via J domain). Component of an EIF2 complex at least composed of CELF1/CUGBP1, CALR, CALR3, EIF2S1, EIF2S2, HSP90B1 and HSPA5. Part of a large chaperone multiprotein complex comprising DNAJB11, HSP90B1, HSPA5, HYOU, PDIA2, PDIA4, PDIA6, PPIB, SDF2L1, UGGT1 and very small amounts of ERP29, but not, or at very low levels, CALR nor CANX. Interacts with TMEM132A and TRIM21. May form a complex with ERLEC1, OS9, SEL1L and SYVN1. Interacts with DNAJC10. Interacts with DNAJB9/ERdj4; leading to recruit HSPA5/BiP to ERN1/IRE1. Interacts with ERN1/IRE1 (via luminal domain); the interaction takes place following interaction with DNAJB9/ERdj4 and leads to inactivate ERN1/IRE1, the interaction also competitively inhibits ERN1 interaction with MANF. Interacts directly with MANF (via SAP domain); the interaction inhibits ATP binding to HSPA5/BiP and subsequent nucleotide exchange. Interacts with EIF2AK3/PERK (via luminal domain); interaction leads to inactivate EIF2AK3/PERK. Interacts with MX1. Interacts with METTL23. Interacts with CEMIP; the interaction induces calcium leakage from the endoplasmic reticulum and cell migration. Interacts with PCSK4 form; the interaction takes place in the endoplasmic reticulum. Interacts with CIPC. Interacts with CCDC88B (via C-terminus); the interaction opposes ERN1-mediated JNK activation, protecting against apoptosis. Interacts with INPP5K; necessary for INPP5K localization at the endoplasmic reticulum. Interacts with MANF; the interaction is direct. Interacts with LOXL2; leading to activate the ERN1/IRE1-XBP1 pathway of the unfolded protein response. Interacts with CLU under stressed condition; interaction increases CLU protein stability; facilitates its retrotranslocation and redistribution to the mitochondria; cooperatively suppress stress-induced apoptosis by stabilizing mitochondrial membrane integrity. Interacts with CCDC47. Interacts with CLN3. Interacts with ELAPOR1; may regulate the function of HSPA5 in apoptosis and cell proliferation. Interacts with CASP7. Interacts with ILDR2; the interaction stabilizes ILDR2 expression. Interacts with ADAM7. In terms of processing, in unstressed cells, AMPylation at Thr-162 by FICD inactivates the chaperome activity: AMPylated form is locked in a relatively inert state and only weakly stimulated by J domain-containing proteins. In response to endoplasmic reticulum stress, de-AMPylation by the same protein, FICD, restores the chaperone activity.

The protein resides in the endoplasmic reticulum lumen. It localises to the melanosome. Its subcellular location is the cytoplasm. It is found in the cell surface. The catalysed reaction is ATP + H2O = ADP + phosphate + H(+). Its activity is regulated as follows. The chaperone activity is regulated by ATP-induced allosteric coupling of the nucleotide-binding (NBD) and substrate-binding (SBD) domains. In the ADP-bound and nucleotide-free (apo) states, the two domains have little interaction. In contrast, in the ATP-bound state the two domains are tightly coupled, which results in drastically accelerated kinetics in both binding and release of polypeptide substrates. J domain-containing co-chaperones (DNAJB9/ERdj4 or DNAJC10/ERdj5) stimulate the ATPase activity and are required for efficient substrate recognition by HSPA5/BiP. Homooligomerization inactivates participating HSPA5/BiP protomers and probably act as reservoirs to store HSPA5/BiP molecules when they are not needed by the cell. Functionally, endoplasmic reticulum chaperone that plays a key role in protein folding and quality control in the endoplasmic reticulum lumen. Involved in the correct folding of proteins and degradation of misfolded proteins via its interaction with DNAJC10/ERdj5, probably to facilitate the release of DNAJC10/ERdj5 from its substrate. Acts as a key repressor of the EIF2AK3/PERK and ERN1/IRE1-mediated unfolded protein response (UPR). In the unstressed endoplasmic reticulum, recruited by DNAJB9/ERdj4 to the luminal region of ERN1/IRE1, leading to disrupt the dimerization of ERN1/IRE1, thereby inactivating ERN1/IRE1. Also binds and inactivates EIF2AK3/PERK in unstressed cells. Accumulation of misfolded protein in the endoplasmic reticulum causes release of HSPA5/BiP from ERN1/IRE1 and EIF2AK3/PERK, allowing their homodimerization and subsequent activation. Plays an auxiliary role in post-translational transport of small presecretory proteins across endoplasmic reticulum (ER). May function as an allosteric modulator for SEC61 channel-forming translocon complex, likely cooperating with SEC62 to enable the productive insertion of these precursors into SEC61 channel. Appears to specifically regulate translocation of precursors having inhibitory residues in their mature region that weaken channel gating. May also play a role in apoptosis and cell proliferation. The protein is Endoplasmic reticulum chaperone BiP of Sus scrofa (Pig).